An 875-amino-acid chain; its full sequence is Probable ATP-dependent RNA helicase DDX10 (875 aa).

The interval 1–43 is disordered; that stretch reads MGKTANSPGSGARPDPVRSFNRWKKKHSHRQNKKKQLRKQLKK. T4 carries the phosphothreonine modification. At S7 the chain carries Phosphoserine. The segment covering 21–41 has biased composition (basic residues); it reads NRWKKKHSHRQNKKKQLRKQL. The short motif at 69 to 97 is the Q motif element; that stretch reads TRFSDFPLSKKTLKGLQEAQYRLVTEIQK. Residues 89–91, Q96, and 113–120 each bind ATP; these read YRL and AKTGSGKT. The 175-residue stretch at 100–274 folds into the Helicase ATP-binding domain; it reads IGLALQGKDV…RLSLKNPEYV (175 aa). Positions 222–225 match the DEAD box motif; sequence DEAD. Positions 287 to 448 constitute a Helicase C-terminal domain; it reads TLEQNYIVCE…EIKINPEKLI (162 aa). Position 539 is a phosphoserine (S539). K555 bears the N6-acetyllysine mark. The segment at 562-631 is disordered; the sequence is GGKRLEGTEH…QFLDRDEEEE (70 aa). Residues 564–575 are compositionally biased toward basic and acidic residues; it reads KRLEGTEHRQDN. T577 carries the post-translational modification Phosphothreonine. Positions 577–593 are enriched in acidic residues; sequence TGNEEQEEEEDDEEEME. Polar residues predominate over residues 603-613; sequence QAPSLPNTSEA. K649 is covalently cross-linked (Glycyl lysine isopeptide (Lys-Gly) (interchain with G-Cter in SUMO2)). The segment at 703-850 is disordered; that stretch reads MQKSAIKDAE…HNRKKARWDT (148 aa). The span at 727–741 shows a compositional bias: basic and acidic residues; sequence ERLQEEDKFDKEEYR. Positions 742–751 are enriched in basic residues; that stretch reads KKIKAKHREK. Residues 752-771 show a composition bias toward basic and acidic residues; it reads RLKEREARREANKRQAKAKD. Acidic residues predominate over residues 772-790; that stretch reads EEEAFLDWSDDDDDDDDGF. S780 carries the phosphoserine modification. A compositionally biased stretch (basic and acidic residues) spans 812-821; sequence MENKISDTKK. Position 831 is a phosphoserine (S831).

The protein belongs to the DEAD box helicase family. DDX10/DBP4 subfamily. In terms of assembly, interacts with AIM2; this interaction promotes AIM2 stability. Interacts with SCNA; this interaction causes DDX10 mislocalization to the nucleoplasm and cytoplasmic inclusions. High in testis but widely expressed.

It localises to the cytoplasm. It is found in the nucleus. The protein resides in the nucleolus. It catalyses the reaction ATP + H2O = ADP + phosphate + H(+). In terms of biological role, putative ATP-dependent RNA helicase that plays various role in innate immunity or inflammation. Plays a role in the enhancement of AIM2-induced inflammasome activation by interacting with AIM2 and stabilizing its protein level. Negatively regulates viral infection by promoting interferon beta production and interferon stimulated genes/ISGs expression. The sequence is that of Probable ATP-dependent RNA helicase DDX10 (DDX10) from Homo sapiens (Human).